Reading from the N-terminus, the 804-residue chain is Elongation factor G, mitochondrial (804 aa).

Residues 1–63 (MSMHRVARAV…RHFSQSPIIR (63 aa)) constitute a mitochondrion transit peptide. Residues 99–385 (RRVRNIGIAA…AVCDYLPNPA (287 aa)) enclose the tr-type G domain. Residues 108–115 (AHIDSGKT), 183–187 (DTPGH), and 237–240 (NKMD) contribute to the GTP site.

Belongs to the TRAFAC class translation factor GTPase superfamily. Classic translation factor GTPase family. EF-G/EF-2 subfamily.

It localises to the mitochondrion. The protein operates within protein biosynthesis; polypeptide chain elongation. In terms of biological role, mitochondrial GTPase that catalyzes the GTP-dependent ribosomal translocation step during translation elongation. During this step, the ribosome changes from the pre-translocational (PRE) to the post-translocational (POST) state as the newly formed A-site-bound peptidyl-tRNA and P-site-bound deacylated tRNA move to the P and E sites, respectively. Catalyzes the coordinated movement of the two tRNA molecules, the mRNA and conformational changes in the ribosome. The sequence is that of Elongation factor G, mitochondrial (mef1) from Botryotinia fuckeliana (strain B05.10) (Noble rot fungus).